Here is a 176-residue protein sequence, read N- to C-terminus: CDP-archaeol synthase (176 aa).

Helical transmembrane passes span 41–61 (GLIG…FLYN), 73–93 (IITV…KSYF), 114–134 (VVGS…LNWF), and 138–158 (FDSV…SPLL).

Belongs to the CDP-archaeol synthase family. The cofactor is Mg(2+).

The protein resides in the cell membrane. The catalysed reaction is 2,3-bis-O-(geranylgeranyl)-sn-glycerol 1-phosphate + CTP + H(+) = CDP-2,3-bis-O-(geranylgeranyl)-sn-glycerol + diphosphate. Its pathway is membrane lipid metabolism; glycerophospholipid metabolism. In terms of biological role, catalyzes the formation of CDP-2,3-bis-(O-geranylgeranyl)-sn-glycerol (CDP-archaeol) from 2,3-bis-(O-geranylgeranyl)-sn-glycerol 1-phosphate (DGGGP) and CTP. This reaction is the third ether-bond-formation step in the biosynthesis of archaeal membrane lipids. The protein is CDP-archaeol synthase of Methanocorpusculum labreanum (strain ATCC 43576 / DSM 4855 / Z).